Here is a 129-residue protein sequence, read N- to C-terminus: Protein Turandot A (129 aa).

The first 21 residues, 1 to 21 (MNSLTGFMCCALLLISPLCMG), serve as a signal peptide directing secretion. Residue N49 is glycosylated (N-linked (GlcNAc...) asparagine).

This sequence belongs to the Turandot family.

The protein resides in the secreted. Its function is as follows. A humoral factor that plays a role in stress tolerance; gives increased resistance to the lethal effects of bacterial challenge and stress. Regulated by the JAK/STAT pathway and NF-KB-like Relish pathway in the fat body, upd3 in the hemocytes and Mekk1 in response to septic injury and consequent immune response. The sequence is that of Protein Turandot A (TotA) from Drosophila yakuba (Fruit fly).